We begin with the raw amino-acid sequence, 1037 residues long: Guanine nucleotide-binding protein G(s) subunit alpha isoforms XLas (1037 aa).

Disordered regions lie at residues 1-105 (MGVR…MPFE), 185-224 (APGG…EETM), 283-588 (SPSQ…TSGC), and 640-666 (PLAE…KKRS). Residues 33-46 (APGAAAPGAGPSPA) show a composition bias toward low complexity. The span at 343–354 (PDKRERAERPPV) shows a compositional bias: basic and acidic residues. Low complexity-rich tracts occupy residues 361–408 (MEGA…GATP) and 416–521 (APAD…PASG). A compositionally biased stretch (basic and acidic residues) spans 553–565 (GKSESSRGRRVYY). Acidic residues predominate over residues 572–583 (SDDDSSGDESDD). Basic and acidic residues predominate over residues 640–660 (PLAEKRRQMRKEALEKRAQKR). Residues 641-667 (LAEKRRQMRKEALEKRAQKRAEKKRSK) are a coiled coil. Positions 682–1037 (CTHRLLLLGA…RMHLRQYELL (356 aa)) constitute a G-alpha domain. The segment at 685 to 698 (RLLLLGAGESGKST) is G1 motif. 690–698 (GAGESGKST) provides a ligand contact to GTP. Serine 697 provides a ligand contact to Mg(2+). Residues 711–734 (FNGEGGEEDPQAARSNSDGEKATK) are disordered. Residues 730–756 (EKATKVQDIKNNLKEAIETIVAAMSNL) are a coiled coil. Residues 839–847 (DLLRCRVLT) form a G2 motif region. Residues 840–847 (LLRCRVLT), 866–870 (DVGGQ), and 935–938 (NKQD) contribute to the GTP site. ADP-ribosylarginine; by cholera toxin is present on arginine 844. Threonine 847 contributes to the Mg(2+) binding site. Positions 862–871 (FHMFDVGGQR) are G3 motif. Residues 931 to 938 (ILFLNKQD) are G4 motif. Serine 995 bears the Phosphoserine mark. A G5 motif region spans residues 1007-1012 (TCAVDT). Alanine 1009 is a GTP binding site.

It belongs to the G-alpha family. G(s) subfamily. As to quaternary structure, g proteins are composed of 3 units; alpha, beta and gamma. The alpha chain contains the guanine nucleotide binding site. Interacts through its N-terminal region with ALEX which is produced from the same locus in a different open reading frame. This interaction may inhibit its adenylyl cyclase-stimulating activity. Interacts with MAGED2.

The protein localises to the cell membrane. Its subcellular location is the apical cell membrane. The enzyme catalyses GTP + H2O = GDP + phosphate + H(+). In terms of biological role, guanine nucleotide-binding proteins (G proteins) function as transducers in numerous signaling pathways controlled by G protein-coupled receptors (GPCRs). The alpha chain contains the guanine nucleotide binding site and alternates between an active, GTP-bound state and an inactive, GDP-bound state. Signaling by an activated GPCR promotes GDP release and GTP binding. The alpha subunit has a low GTPase activity that converts bound GTP to GDP, thereby terminating the signal. Both GDP release and GTP hydrolysis are modulated by numerous regulatory proteins. Signaling involves the activation of adenylyl cyclases, resulting in increased levels of the signaling molecule cAMP. GNAS functions downstream of several GPCRs, including beta-adrenergic receptors. XLas isoforms interact with the same set of receptors as Gnas isoforms. In Homo sapiens (Human), this protein is Guanine nucleotide-binding protein G(s) subunit alpha isoforms XLas (GNAS).